A 57-amino-acid chain; its full sequence is Large ribosomal subunit protein bL32 (57 aa).

The span at 1 to 20 (MAVPKKKTSKGKRNQRHAVW) shows a compositional bias: basic residues. The segment at 1–23 (MAVPKKKTSKGKRNQRHAVWKAK) is disordered.

Belongs to the bacterial ribosomal protein bL32 family.

The chain is Large ribosomal subunit protein bL32 from Prochlorococcus marinus (strain SARG / CCMP1375 / SS120).